Here is a 98-residue protein sequence, read N- to C-terminus: uncharacterized protein (98 aa).

Positions 1-23 (MKKMQSIVLALSLVLVAPMAAQA) are cleaved as a signal peptide. The disordered stretch occupies residues 68 to 98 (WHLHGPPPPPRHHKKAPHDHHGGHGPGKHHR). Basic residues predominate over residues 77-98 (PRHHKKAPHDHHGGHGPGKHHR).

The protein to E.coli YpeC.

This is an uncharacterized protein from Escherichia coli (strain K12).